Here is a 551-residue protein sequence, read N- to C-terminus: Probable terpene synthase 8 (551 aa).

Mg(2+) is bound by residues Asp307, Asp311, and Glu457. Positions 307–311 match the DDXXD motif motif; the sequence is DDTYD.

It belongs to the terpene synthase family. It depends on Mg(2+) as a cofactor.

Its function is as follows. Probable sesquiterpene synthase. This chain is Probable terpene synthase 8 (TPS8), found in Ricinus communis (Castor bean).